The primary structure comprises 623 residues: tRNA 5-methylaminomethyl-2-thiouridine biosynthesis bifunctional protein MnmC (623 aa).

The segment at 1–244 (MCVSSSIQTA…KREMLKAIWP (244 aa)) is tRNA (mnm(5)s(2)U34)-methyltransferase. An FAD-dependent cmnm(5)s(2)U34 oxidoreductase region spans residues 268 to 623 (IGAGIAGLHC…VKIKKPYYSS (356 aa)).

This sequence in the N-terminal section; belongs to the methyltransferase superfamily. tRNA (mnm(5)s(2)U34)-methyltransferase family. The protein in the C-terminal section; belongs to the DAO family. FAD serves as cofactor.

Its subcellular location is the cytoplasm. It carries out the reaction 5-aminomethyl-2-thiouridine(34) in tRNA + S-adenosyl-L-methionine = 5-methylaminomethyl-2-thiouridine(34) in tRNA + S-adenosyl-L-homocysteine + H(+). In terms of biological role, catalyzes the last two steps in the biosynthesis of 5-methylaminomethyl-2-thiouridine (mnm(5)s(2)U) at the wobble position (U34) in tRNA. Catalyzes the FAD-dependent demodification of cmnm(5)s(2)U34 to nm(5)s(2)U34, followed by the transfer of a methyl group from S-adenosyl-L-methionine to nm(5)s(2)U34, to form mnm(5)s(2)U34. This Acinetobacter baylyi (strain ATCC 33305 / BD413 / ADP1) protein is tRNA 5-methylaminomethyl-2-thiouridine biosynthesis bifunctional protein MnmC.